Reading from the N-terminus, the 263-residue chain is Tryptophan synthase alpha chain (263 aa).

Residues Glu-49 and Asp-60 each act as proton acceptor in the active site.

It belongs to the TrpA family. In terms of assembly, tetramer of two alpha and two beta chains.

The catalysed reaction is (1S,2R)-1-C-(indol-3-yl)glycerol 3-phosphate + L-serine = D-glyceraldehyde 3-phosphate + L-tryptophan + H2O. The protein operates within amino-acid biosynthesis; L-tryptophan biosynthesis; L-tryptophan from chorismate: step 5/5. The alpha subunit is responsible for the aldol cleavage of indoleglycerol phosphate to indole and glyceraldehyde 3-phosphate. This chain is Tryptophan synthase alpha chain, found in Cereibacter sphaeroides (strain ATCC 17029 / ATH 2.4.9) (Rhodobacter sphaeroides).